The sequence spans 268 residues: tRNA threonylcarbamoyladenosine dehydratase (268 aa).

Residues 237-257 (GFGAATMVTATFGFVAVSHAL) form a helical membrane-spanning segment.

Belongs to the HesA/MoeB/ThiF family. Interacts with CsdE.

The protein localises to the membrane. Catalyzes the ATP-dependent dehydration of threonylcarbamoyladenosine at position 37 (t(6)A37) to form cyclic t(6)A37 (ct(6)A37) in tRNAs that read codons beginning with adenine. TcdA is also part of a sulfur transfer pathway; is able to accept sulfur from CsdA directly in vitro, but CsdE might act as the sulfur donor in vivo. This chain is tRNA threonylcarbamoyladenosine dehydratase (tcdA), found in Escherichia coli (strain K12).